The chain runs to 805 residues: MDMITVGQSVKIKRTDGRVHMAVVAVINQSGKCITVEWYERGETKGKEVELDAILTLNPELMQDTVEQHAAPEPKKQATAPMNLSRNPTQSAIGGNLTSRMTMAGNMLNKIQESQSIPNPIVSSNSVNTNSNSNTTAGGGGGTTTSTTTGLQRPRYSQAATGQQQTRIASAVPNNTLPNPSAAASAGPAAQGVATAATTQGAGGASTRRSHALKEVERLKENREKRRARQAEMKEEKVALMNQDPGNPNWETAQMIREYQSTLEFVPLLDGQAVDDHQITVCVRKRPISRKEVNRKEIDVISVPRKDMLIVHEPRSKVDLTKFLENHKFRFDYAFNDTCDNAMVYKYTAKPLVKTIFEGGMATCFAYGQTGSGKTHTMGGEFNGKVQDCKNGIYAMAAKDVFVTLNMPRYRAMNLVVSASFFEIYSGKVFDLLSDKQKLRVLEDGKQQVQVVGLTEKVVDGVEEVLKLIQHGNAARTSGQTSANSNSSRSHAVFQIVLRPQGSTKIHGKFSFIDLAGNERGVDTSSADRQTRMEGAEINKSLLALKECIRALGKQSAHLPFRVSKLTQVLRDSFIGEKSKTCMIAMISPGLSSCEHTLNTLRYADRVKELVVKDIVEVCPGGDTEPIEITDDEEEEELNMVHPHSHQLHPNSHAPASQSNNQRAPASHHSGAVIHNNNNNNNKNGNAGNMDLAMLSSLSEHEMSDELIVQHQAIDDLQQTEEMVVEYHRTVNATLETFLAESKALYNLTNYVDYDQDSYCKRGESMFSQLLDIAIQCRDMMAEYRAKLAKEEMLSCSFNSPNGKR.

Residues 1 to 274 (MDMITVGQSV…FVPLLDGQAV (274 aa)) are globular. Disordered stretches follow at residues 68–94 (QHAA…SAIG) and 117–211 (IPNP…RRSH). Polar residues predominate over residues 80-94 (APMNLSRNPTQSAIG). The segment covering 123–136 (SSNSVNTNSNSNTT) has biased composition (low complexity). At Ser-157 the chain carries Phosphoserine. Residues 158–179 (QAATGQQQTRIASAVPNNTLPN) show a composition bias toward polar residues. The span at 180 to 200 (PSAAASAGPAAQGVATAATTQ) shows a compositional bias: low complexity. Residues 205–244 (ASTRRSHALKEVERLKENREKRRARQAEMKEEKVALMNQD) are a coiled coil. In terms of domain architecture, Kinesin motor spans 278 to 610 (QITVCVRKRP…LRYADRVKEL (333 aa)). 368–375 (GQTGSGKT) is a binding site for ATP. Residue Thr-630 is modified to Phosphothreonine. The interval 633–688 (EEEEELNMVHPHSHQLHPNSHAPASQSNNQRAPASHHSGAVIHNNNNNNNKNGNAG) is disordered. Over residues 648 to 664 (LHPNSHAPASQSNNQRA) the composition is skewed to polar residues. The span at 676–688 (NNNNNNNKNGNAG) shows a compositional bias: low complexity. Phosphoserine occurs at positions 795, 797, and 800.

The protein belongs to the TRAFAC class myosin-kinesin ATPase superfamily. Kinesin family. MCAK/KIF2 subfamily. In terms of assembly, interacts with Alms1a (via C-terminus). As to expression, expressed in male germline stem cells and spermatogonia (at protein level).

It localises to the cytoplasm. Its subcellular location is the cytoskeleton. The protein localises to the microtubule organizing center. The protein resides in the centrosome. It is found in the spindle pole. It localises to the chromosome. Its subcellular location is the centromere. Required during anaphase to drive sister chromatid separation to promote flux by actively depolymerizing kinetochore microtubules at their pole-associated minus ends, thereby moving chromatids through a 'poleward flux'. Involved in asymmetric cell division of sensory organ precursor (SOP) cells by playing a role in the asymmetric localization of Sara-expressing endosomes to the pIIa daughter cell but not to the pIIb cell. Klp98A targets Sara-expressing endosomes to the central spindle which is symmetrically arranged in early cell division. During late cytokinesis, central spindle asymmetry is generated by enrichment of Patronin on the pIIb side which protects microtubules from depolymerization by Klp10A while unprotected microtubules on the pIIa side are disassembled by Klp10A, leading to the asymmetric delivery of Sara-expressing endosomes to the pIIa daughter cell. This is Kinesin-like protein Klp10A from Drosophila melanogaster (Fruit fly).